The primary structure comprises 264 residues: Small ribosomal subunit protein uS2 (264 aa).

The protein belongs to the universal ribosomal protein uS2 family.

The protein is Small ribosomal subunit protein uS2 of Synechococcus sp. (strain JA-2-3B'a(2-13)) (Cyanobacteria bacterium Yellowstone B-Prime).